The following is a 287-amino-acid chain: Universal stress protein Slr1230 (287 aa).

The protein belongs to the universal stress protein A family.

In Synechocystis sp. (strain ATCC 27184 / PCC 6803 / Kazusa), this protein is Universal stress protein Slr1230.